Consider the following 258-residue polypeptide: Steroid 5-alpha-reductase DET2 (258 aa).

Transmembrane regions (helical) follow at residues 8–28 (FHYC…SLYF), 49–69 (LAWF…FPSG), 77–97 (SFLL…LYPL), 109–129 (FPVS…YLQA), 144–164 (LFWW…WVNV), and 201–221 (IMEW…GFFL).

This sequence belongs to the steroid 5-alpha reductase family. As to expression, accumulates in fibers (seed trichomes) during both their initiation and elongation phases. Also present in roots, hypocotyls, leaves, flowers and ovules, and barely in cotyledons.

The protein localises to the membrane. It carries out the reaction a 3-oxo-5alpha-steroid + NADP(+) = a 3-oxo-Delta(4)-steroid + NADPH + H(+). The protein operates within plant hormone biosynthesis; brassinosteroid biosynthesis. In terms of biological role, involved in a reduction step in the biosynthesis of the plant steroid, brassinolide (BL). Promotes cotton fibers (seed trichomes) initiation and elongation. This chain is Steroid 5-alpha-reductase DET2, found in Gossypium hirsutum (Upland cotton).